Reading from the N-terminus, the 500-residue chain is Putative DNA recombinase (500 aa).

Residues 1-144 form the Resolvase/invertase-type recombinase catalytic domain; that stretch reads MIAIYVRVST…SGRLQKMKKG (144 aa). Catalysis depends on serine 9, which acts as the O-(5'-phospho-DNA)-serine intermediate. Positions 152–288 form a DNA-binding region, recombinase; that stretch reads LYGYKFVKEK…QELLGQSKRK (137 aa). Residues 372 to 448 adopt a coiled-coil conformation; sequence KEAEQSNHLS…IQSKMKVLDD (77 aa).

The protein in the N-terminal section; belongs to the site-specific recombinase resolvase family.

Its function is as follows. Putative site-specific recombinase having a very important role in sporulation. It probably plays a role in the recombination of SpoIIIC and SpoIVCB to form sigma K factor. This Bacillus subtilis (strain 168) protein is Putative DNA recombinase (cisA).